The primary structure comprises 861 residues: DNA mismatch repair protein MutS (861 aa).

618–625 provides a ligand contact to ATP; that stretch reads GPNMGGKS.

It belongs to the DNA mismatch repair MutS family.

Its function is as follows. This protein is involved in the repair of mismatches in DNA. It is possible that it carries out the mismatch recognition step. This protein has a weak ATPase activity. The polypeptide is DNA mismatch repair protein MutS (Shewanella frigidimarina (strain NCIMB 400)).